The primary structure comprises 405 residues: Probable tRNA sulfurtransferase (405 aa).

One can recognise a THUMP domain in the interval 60–165 (EPVNDRLKVV…QDGAYISNQL (106 aa)). ATP contacts are provided by residues 183–184 (ML), 208–209 (HF), arginine 265, glycine 287, and glutamine 296.

Belongs to the ThiI family.

It localises to the cytoplasm. The catalysed reaction is [ThiI sulfur-carrier protein]-S-sulfanyl-L-cysteine + a uridine in tRNA + 2 reduced [2Fe-2S]-[ferredoxin] + ATP + H(+) = [ThiI sulfur-carrier protein]-L-cysteine + a 4-thiouridine in tRNA + 2 oxidized [2Fe-2S]-[ferredoxin] + AMP + diphosphate. It catalyses the reaction [ThiS sulfur-carrier protein]-C-terminal Gly-Gly-AMP + S-sulfanyl-L-cysteinyl-[cysteine desulfurase] + AH2 = [ThiS sulfur-carrier protein]-C-terminal-Gly-aminoethanethioate + L-cysteinyl-[cysteine desulfurase] + A + AMP + 2 H(+). It functions in the pathway cofactor biosynthesis; thiamine diphosphate biosynthesis. In terms of biological role, catalyzes the ATP-dependent transfer of a sulfur to tRNA to produce 4-thiouridine in position 8 of tRNAs, which functions as a near-UV photosensor. Also catalyzes the transfer of sulfur to the sulfur carrier protein ThiS, forming ThiS-thiocarboxylate. This is a step in the synthesis of thiazole, in the thiamine biosynthesis pathway. The sulfur is donated as persulfide by IscS. The sequence is that of Probable tRNA sulfurtransferase from Lactobacillus delbrueckii subsp. bulgaricus (strain ATCC BAA-365 / Lb-18).